The primary structure comprises 140 residues: Nucleoside diphosphate kinase (140 aa).

6 residues coordinate ATP: Lys11, Phe59, Arg87, Thr93, Arg104, and Asn114. The active-site Pros-phosphohistidine intermediate is the His117.

The protein belongs to the NDK family. In terms of assembly, homotetramer. It depends on Mg(2+) as a cofactor.

Its subcellular location is the cytoplasm. The enzyme catalyses a 2'-deoxyribonucleoside 5'-diphosphate + ATP = a 2'-deoxyribonucleoside 5'-triphosphate + ADP. It catalyses the reaction a ribonucleoside 5'-diphosphate + ATP = a ribonucleoside 5'-triphosphate + ADP. In terms of biological role, major role in the synthesis of nucleoside triphosphates other than ATP. The ATP gamma phosphate is transferred to the NDP beta phosphate via a ping-pong mechanism, using a phosphorylated active-site intermediate. The polypeptide is Nucleoside diphosphate kinase (Rickettsia peacockii (strain Rustic)).